We begin with the raw amino-acid sequence, 371 residues long: Phospho-N-acetylmuramoyl-pentapeptide-transferase (371 aa).

The next 9 helical transmembrane spans lie at 19-39, 48-68, 95-115, 119-139, 155-175, 180-200, 227-247, 284-304, and 349-369; these read LYWLLLLCLSGVALATDIYSG, IVAPLWTSTLVVTLLGFWAVP, TMGGIFFMPVALVLGWAWVAA, NLLEVSAAVLLTLCLGLVGWF, AKLRLGIELGSGLIFGLWLFL, ISGLALPFGLSLPIGVLFLAI, AIAFLGLALVVAPSWPGLMIF, AVGLITNTLWALLILSGLFLV, and VVSTFYACVAVLAVAACGLNA.

The protein belongs to the glycosyltransferase 4 family. MraY subfamily. Requires Mg(2+) as cofactor.

It localises to the cell inner membrane. The enzyme catalyses UDP-N-acetyl-alpha-D-muramoyl-L-alanyl-gamma-D-glutamyl-meso-2,6-diaminopimeloyl-D-alanyl-D-alanine + di-trans,octa-cis-undecaprenyl phosphate = di-trans,octa-cis-undecaprenyl diphospho-N-acetyl-alpha-D-muramoyl-L-alanyl-D-glutamyl-meso-2,6-diaminopimeloyl-D-alanyl-D-alanine + UMP. It participates in cell wall biogenesis; peptidoglycan biosynthesis. Catalyzes the initial step of the lipid cycle reactions in the biosynthesis of the cell wall peptidoglycan: transfers peptidoglycan precursor phospho-MurNAc-pentapeptide from UDP-MurNAc-pentapeptide onto the lipid carrier undecaprenyl phosphate, yielding undecaprenyl-pyrophosphoryl-MurNAc-pentapeptide, known as lipid I. This chain is Phospho-N-acetylmuramoyl-pentapeptide-transferase, found in Acaryochloris marina (strain MBIC 11017).